Reading from the N-terminus, the 349-residue chain is MAGPAIHTAPMLFLVLLLPLELSLAGALAPGTPARNLPENHIDLPGPALWTPQASHHRRRGPGKKEWGPGLPSQAQDGAVVTATRQASRLPEAEGLLPEQSPAGLLQDKDLLLGLALPYPEKENRPPGWERTRKRSREHKRRRDRLRLHQGRALVRGPSSLMKKAELSEAQVLDAAMEESSTSLAPTMFFLTTFEAAPATEESLILPVTSLRPQQAQPRSDGEVMPTLDMALFDWTDYEDLKPDGWPSAKKKEKHRGKLSSDGNETSPAEGEPCDHHQDCLPGTCCDLREHLCTPHNRGLNNKCFDDCMCVEGLRCYAKFHRNRRVTRRKGRCVEPETANGDQGSFINV.

Residues 1–25 (MAGPAIHTAPMLFLVLLLPLELSLA) form the signal peptide. Disordered stretches follow at residues 38–79 (PENH…QDGA), 118–145 (PYPE…RRDR), and 244–273 (DGWP…EGEP). Basic and acidic residues predominate over residues 120–131 (PEKENRPPGWER). Composition is skewed to basic residues over residues 132 to 145 (TRKR…RRDR) and 249 to 258 (AKKKEKHRGK). A glycan (N-linked (GlcNAc...) asparagine) is linked at N264.

The protein belongs to the draxin family. As to quaternary structure, interacts with LRP6.

Its subcellular location is the secreted. Functionally, chemorepulsive axon guidance protein required for the development of spinal cord and forebrain commissures. Acts as a chemorepulsive guidance protein for commissural axons during development. Able to inhibit or repel neurite outgrowth from dorsal spinal cord. Inhibits the stabilization of cytosolic beta-catenin (CTNNB1) via its interaction with LRP6, thereby acting as an antagonist of Wnt signaling pathway. The polypeptide is Draxin (Homo sapiens (Human)).